We begin with the raw amino-acid sequence, 373 residues long: MPRTRNIGALCTLPEDTTHSGRPRRGVQRSYISRMAEPAPANMNDPLLLPLRMNTPGLSLVQILLGYMSWLTYLACFLRTQTQQVFLNTCRCKLFCQKVMEKMGLLVLCVFGFWMFSMHLPSKVEVWQDDSINGPLQSLRMYQEKVRHHTGEIQDLRGSMNQLIAKLQKMEAISDEQKMAQKIMKMIQGDYIEKPDFALKSIGASIDFEHTSATYNHDKARSYWNWIRLWNYAQPPDVILEPNVTPGNCWAFASDRGQVTIRLAQKVYLSNITLQHIPKTISLSGSPDTAPKDIVIYGLESLPREEVFLGAFQFQPENVIQMFQLQNLPPRSFAAVKVKISSNWGNPRFTCMYRVRVHGSVTPPKDSHLEPLS.

Over 1 to 103 (MPRTRNIGAL…LFCQKVMEKM (103 aa)) the chain is Nuclear. The chain crosses the membrane as a helical span at residues 104-120 (GLLVLCVFGFWMFSMHL). Over 121–373 (PSKVEVWQDD…PKDSHLEPLS (253 aa)) the chain is Perinuclear space. Positions 136–180 (LQSLRMYQEKVRHHTGEIQDLRGSMNQLIAKLQKMEAISDEQKMA) form a coiled coil. Residues 204–362 (ASIDFEHTSA…YRVRVHGSVT (159 aa)) form the SUN domain.

Probable homotrimer. Interacts with DNAJB13. In terms of processing, highly glycosylated in the Golgi apparatus during spermiogenesis. As to expression, testis-specific, abundantly expressed in spermatocytes and round spermatids.

The protein localises to the nucleus inner membrane. It is found in the golgi apparatus. Plays an essential role in anchoring sperm head to the tail. Is responsible for the attachment of the coupling apparatus to the sperm nuclear envelope. This is SUN domain-containing protein 5 (Sun5) from Mus musculus (Mouse).